We begin with the raw amino-acid sequence, 468 residues long: Pentatricopeptide repeat-containing protein At5g46680 (468 aa).

PPR repeat units lie at residues 12–46 (STKL…GVLP), 47–81 (DVIT…GIEP), 82–116 (DVTT…GLSP), 117–152 (DMWS…GLVP), 153–183 (GIDT…LKSR), 187–221 (ELMT…GYTP), 222–256 (NAVT…GYTF), 257–291 (DGFA…GTRS), 293–327 (DIVS…GLKP), 328–362 (DDYT…GMQP), 363–393 (SVVT…MEVR), and 394–428 (DEFT…GMKI).

Belongs to the PPR family. P subfamily.

The protein is Pentatricopeptide repeat-containing protein At5g46680 of Arabidopsis thaliana (Mouse-ear cress).